A 158-amino-acid chain; its full sequence is AP-1 complex subunit sigma-1A (158 aa).

Phosphoserine is present on S147.

Belongs to the adaptor complexes small subunit family. Adaptor protein complex 1 (AP-1) is a heterotetramer composed of two large adaptins (gamma-type subunit AP1G1 and beta-type subunit AP1B1), a medium adaptin (mu-type subunit AP1M1 or AP1M2) and a small adaptin (sigma-type subunit AP1S1 or AP1S2 or AP1S3). As to expression, widely expressed.

It is found in the golgi apparatus. Its subcellular location is the cytoplasmic vesicle membrane. It localises to the membrane. The protein localises to the clathrin-coated pit. Its function is as follows. Subunit of clathrin-associated adaptor protein complex 1 that plays a role in protein sorting in the late-Golgi/trans-Golgi network (TGN) and/or endosomes. The AP complexes mediate both the recruitment of clathrin to membranes and the recognition of sorting signals within the cytosolic tails of transmembrane cargo molecules. This Homo sapiens (Human) protein is AP-1 complex subunit sigma-1A (AP1S1).